The primary structure comprises 513 residues: Histidine ammonia-lyase (513 aa).

Positions alanine 142–glycine 144 form a cross-link, 5-imidazolinone (Ala-Gly). Serine 143 bears the 2,3-didehydroalanine (Ser) mark.

The protein belongs to the PAL/histidase family. Contains an active site 4-methylidene-imidazol-5-one (MIO), which is formed autocatalytically by cyclization and dehydration of residues Ala-Ser-Gly.

It is found in the cytoplasm. The enzyme catalyses L-histidine = trans-urocanate + NH4(+). Its pathway is amino-acid degradation; L-histidine degradation into L-glutamate; N-formimidoyl-L-glutamate from L-histidine: step 1/3. This chain is Histidine ammonia-lyase, found in Hyphomonas neptunium (strain ATCC 15444).